The primary structure comprises 403 residues: Dynactin subunit 2 (403 aa).

Residues 1–26 are disordered; sequence MADPKYADLPGIARNEPDVYETSDLP. The residue at position 2 (Ala2) is an N-acetylalanine. Residue Tyr6 is modified to Phosphotyrosine. Ser83 is modified (phosphoserine). Tyr86 carries the phosphotyrosine modification. Residues 100 to 130 adopt a coiled-coil conformation; it reads QQKYQRLLHEVQELTTEVEKIKTTVKESATE. Phosphothreonine is present on residues Thr134 and Thr200. Positions 184–204 are disordered; the sequence is TKNSKGTGSGGKTTSGTPPDS. The stretch at 216–248 forms a coiled coil; the sequence is EQDKFSQAAKVAELEKRLTELEATVRCDQDAQN. Ser322 is subject to Phosphoserine.

It belongs to the dynactin subunit 2 family. As to quaternary structure, subunit of dynactin, a multiprotein complex part of a tripartite complex with dynein and a adapter, such as BICDL1, BICD2 or HOOK3. The dynactin complex is built around ACTR1A/ACTB filament and consists of an actin-related filament composed of a shoulder domain, a pointed end and a barbed end. Its length is defined by its flexible shoulder domain. The soulder is composed of 2 DCTN1 subunits, 4 DCTN2 and 2 DCTN3. The 4 DCNT2 (via N-terminus) bind the ACTR1A filament and act as molecular rulers to determine the length. The pointed end is important for binding dynein-dynactin cargo adapters and consists of 4 subunits: ACTR10, DCNT4, DCTN5 and DCTN6. The barbed end is composed of a CAPZA1:CAPZB heterodimers, which binds ACTR1A/ACTB filament and dynactin and stabilizes dynactin. Interacts with BICD2 and CEP135. Interacts with DYNAP. Interacts with ECPAS. Interacts with MAPRE1.

It localises to the cytoplasm. It is found in the cytoskeleton. The protein resides in the microtubule organizing center. Its subcellular location is the centrosome. The protein localises to the membrane. In terms of biological role, part of the dynactin complex that activates the molecular motor dynein for ultra-processive transport along microtubules. In the dynactin soulder domain, binds the ACTR1A filament and acts as a molecular ruler to determine the length. Modulates cytoplasmic dynein binding to an organelle, and plays a role in prometaphase chromosome alignment and spindle organization during mitosis. Involved in anchoring microtubules to centrosomes. May play a role in synapse formation during brain development. This is Dynactin subunit 2 (DCTN2) from Bos taurus (Bovine).